The primary structure comprises 242 residues: UPF0173 metal-dependent hydrolase Rxyl_1261 (242 aa).

Belongs to the UPF0173 family.

This Rubrobacter xylanophilus (strain DSM 9941 / JCM 11954 / NBRC 16129 / PRD-1) protein is UPF0173 metal-dependent hydrolase Rxyl_1261.